A 264-amino-acid polypeptide reads, in one-letter code: Phosphate import ATP-binding protein PstB (264 aa).

The 240-residue stretch at 11–250 (LKAEALSVYY…DTTEKIFDSP (240 aa)) folds into the ABC transporter domain. An ATP-binding site is contributed by 43–50 (GPSGCGKS).

The protein belongs to the ABC transporter superfamily. Phosphate importer (TC 3.A.1.7) family. The complex is composed of two ATP-binding proteins (PstB), two transmembrane proteins (PstC and PstA) and a solute-binding protein (PstS).

The protein resides in the cell inner membrane. It carries out the reaction phosphate(out) + ATP + H2O = ADP + 2 phosphate(in) + H(+). In terms of biological role, part of the ABC transporter complex PstSACB involved in phosphate import. Responsible for energy coupling to the transport system. The polypeptide is Phosphate import ATP-binding protein PstB (Synechococcus elongatus (strain ATCC 33912 / PCC 7942 / FACHB-805) (Anacystis nidulans R2)).